The primary structure comprises 238 residues: MSEVTTAEFNEEGKYLRKIRSFVLREGRLTKGQAQAIESQWPTMGLDYSPVPLNLSEVFGREADTVLEIGFGMGASLVQMAKDAPEQNFIGIEVHKPGVGSCLSDAAIAGVTNLRVYHHDAMEVLEHAIADGSLARVQLFFPDPWHKKRHHKRRIVQAEFAELVRRKLKIGGVFHMATDWEEYSEHMLEVMNAAPGYKNQSADGTVVPRPDHRPLTKFEARGHRLGHGVWDLMFERIA.

Positions 68, 93, 120, and 143 each coordinate S-adenosyl-L-methionine. Residue D143 is part of the active site. Residues K147, D179, and 216-219 (TKFE) contribute to the substrate site.

Belongs to the class I-like SAM-binding methyltransferase superfamily. TrmB family.

The catalysed reaction is guanosine(46) in tRNA + S-adenosyl-L-methionine = N(7)-methylguanosine(46) in tRNA + S-adenosyl-L-homocysteine. It participates in tRNA modification; N(7)-methylguanine-tRNA biosynthesis. Its function is as follows. Catalyzes the formation of N(7)-methylguanine at position 46 (m7G46) in tRNA. This Shewanella putrefaciens (strain CN-32 / ATCC BAA-453) protein is tRNA (guanine-N(7)-)-methyltransferase.